Reading from the N-terminus, the 206-residue chain is Protein Mabiki (206 aa).

Residues 54–77 (FSDQDADFPPLPKRRRLGSSSSSV) are disordered.

Plays a role in inducing apoptosis and is involved in the repair of head patterning defects in the embryo caused by extra maternal copies of the homeotic gene bicoid. This chain is Protein Mabiki, found in Drosophila melanogaster (Fruit fly).